The sequence spans 318 residues: Retinol dehydrogenase 11 (318 aa).

Residues 1 to 21 form a helical; Signal-anchor for type II membrane protein membrane-spanning segment; that stretch reads MVELMFPLLLLLLPFLLYMAA. Topologically, residues 22–318 are cytoplasmic; it reads PQIRKMLSSG…SCDLLGLPID (297 aa). Residue 48 to 54 participates in NADP(+) binding; it reads GANTGIG. Lys-112 bears the N6-acetyllysine mark. Ser-177 is a binding site for substrate. The active-site Proton acceptor is Tyr-202.

This sequence belongs to the short-chain dehydrogenases/reductases (SDR) family. Interacts with SELENOF. Not glycosylated. Predominantly expressed in the epithelial cells of prostate, in both basal and luminal secretory cell populations. Expressed at low levels in spleen, thymus, testis, ovary, small intestine, colon, peripherical blood leukocytes, kidney, adrenal gland and fetal liver. Not detected in prostatic fibromuscular stromal cells, endothelial cells, or infiltrating lymphocytes.

It localises to the endoplasmic reticulum membrane. The catalysed reaction is all-trans-retinol + NADP(+) = all-trans-retinal + NADPH + H(+). It catalyses the reaction 11-cis-retinol + NADP(+) = 11-cis-retinal + NADPH + H(+). It carries out the reaction 9-cis-retinol + NADP(+) = 9-cis-retinal + NADPH + H(+). The enzyme catalyses 13-cis-retinol + NADP(+) = 13-cis-retinal + NADPH + H(+). It participates in cofactor metabolism; retinol metabolism. SELENOF decreases the retinol dehydrogenase activity. Functionally, retinol dehydrogenase with a clear preference for NADP. Displays high activity towards 9-cis, 11-cis and all-trans-retinol, and to a lesser extent on 13-cis-retinol. Exhibits a low reductive activity towards unsaturated medium-chain aldehydes such as cis -6-nonenal and no activity toward nonanal or 4-hydroxy-nonenal. Has no dehydrogenase activity towards steroid. In Homo sapiens (Human), this protein is Retinol dehydrogenase 11 (RDH11).